Reading from the N-terminus, the 152-residue chain is Large ribosomal subunit protein uL22 (152 aa).

The protein belongs to the universal ribosomal protein uL22 family. Part of the 50S ribosomal subunit.

Functionally, this protein binds specifically to 23S rRNA. It makes multiple contacts with different domains of the 23S rRNA in the assembled 50S subunit and ribosome. Its function is as follows. The globular domain of the protein is located near the polypeptide exit tunnel on the outside of the subunit, while an extended beta-hairpin is found that lines the wall of the exit tunnel in the center of the 70S ribosome. This chain is Large ribosomal subunit protein uL22, found in Methanothrix thermoacetophila (strain DSM 6194 / JCM 14653 / NBRC 101360 / PT) (Methanosaeta thermophila).